The chain runs to 438 residues: uncharacterized protein (438 aa).

The next 12 membrane-spanning stretches (helical) occupy residues 22-42, 59-79, 89-109, 137-157, 174-194, 237-257, 258-278, 292-312, 330-350, 356-376, 380-400, and 418-438; these read VSPI…GGFG, SAAL…AGLF, IVKG…MLIA, MVMA…TPWG, FFVP…FLAF, LIYL…LGTK, HPSV…YPNV, AITV…LSGT, MGGF…FVLS, FGMV…PVEI, SIMG…VLLV, and AVIT…ITIL.

This sequence belongs to the CitM (TC 2.A.11) transporter family.

The protein resides in the cell membrane. In terms of biological role, transports the free citrate anion. This is an uncharacterized protein from Bacillus subtilis (strain 168).